The sequence spans 76 residues: Exodeoxyribonuclease 7 small subunit (76 aa).

It belongs to the XseB family. Heterooligomer composed of large and small subunits.

It localises to the cytoplasm. The catalysed reaction is Exonucleolytic cleavage in either 5'- to 3'- or 3'- to 5'-direction to yield nucleoside 5'-phosphates.. Bidirectionally degrades single-stranded DNA into large acid-insoluble oligonucleotides, which are then degraded further into small acid-soluble oligonucleotides. The polypeptide is Exodeoxyribonuclease 7 small subunit (Staphylococcus haemolyticus (strain JCSC1435)).